Here is a 692-residue protein sequence, read N- to C-terminus: 5-taurinomethyluridine-[tRNA] synthase subunit MTO1, mitochondrial (692 aa).

Residues 1-25 (MFYFRGCGRWVAASFTKLQFPLARL) constitute a mitochondrion transit peptide. FAD-binding positions include 43-48 (GGGHAG), valine 155, serine 218, and glutamine 407. The residue at position 508 (lysine 508) is an N6-methyllysine.

Belongs to the MnmG family. Homodimer; forms a dimer in the presence of potassium. Interacts with GTPBP3; forms the GTPBP3-MTO1 complex composed of homodimers of GTPBP3 and MTO1. Requires FAD as cofactor.

It localises to the mitochondrion. The catalysed reaction is 5,10-methylenetetrahydrofolate + uridine(34) in tRNA + taurine + GTP + A + H2O = 5-taurinomethyluridine(34) in tRNA + 7,8-dihydrofolate + GDP + AH2 + phosphate + H(+). Its function is as follows. Component of the GTPBP3-MTO1 complex that catalyzes the 5-taurinomethyluridine (taum(5)U) modification at the 34th wobble position (U34) of mitochondrial tRNAs (mt-tRNAs), which plays a role in mt-tRNA decoding and mitochondrial translation. Taum(5)U formation on mammalian mt-tRNA requires the presence of both GTPBP3-mediated GTPase activity and MTO1 catalytic activity. This is 5-taurinomethyluridine-[tRNA] synthase subunit MTO1, mitochondrial (MTO1) from Pongo abelii (Sumatran orangutan).